A 235-amino-acid polypeptide reads, in one-letter code: Isopentenyl-diphosphate Delta-isomerase I (235 aa).

Position 38 (Lys-38) interacts with substrate. 2 residues coordinate Mg(2+): His-42 and His-54. The region spanning 52 to 204 is the Nudix hydrolase domain; sequence LLHRAFSVFL…GLKLSPWFRL (153 aa). Positions 73 and 77 each coordinate substrate. Cys-89 is a catalytic residue. Ser-90 contacts substrate. Mg(2+) contacts are provided by Glu-149 and Glu-151. Glu-151 is an active-site residue.

The protein belongs to the IPP isomerase type 1 family. Mg(2+) is required as a cofactor.

The catalysed reaction is isopentenyl diphosphate = dimethylallyl diphosphate. Its pathway is isoprenoid biosynthesis; dimethylallyl diphosphate biosynthesis; dimethylallyl diphosphate from isopentenyl diphosphate: step 1/1. It functions in the pathway porphyrin-containing compound metabolism; chlorophyll biosynthesis. Functionally, catalyzes the 1,3-allylic rearrangement of the homoallylic substrate isopentenyl (IPP) to its highly electrophilic allylic isomer, dimethylallyl diphosphate (DMAPP). In Camptotheca acuminata (Happy tree), this protein is Isopentenyl-diphosphate Delta-isomerase I (IPI1).